We begin with the raw amino-acid sequence, 192 residues long: dITP/XTP pyrophosphatase (192 aa).

Position 12 to 17 (12 to 17) interacts with substrate; it reads TNNENK. Mg(2+) contacts are provided by E41 and D70. The active-site Proton acceptor is the D70. Substrate-binding positions include S71, 145–148, K168, and 173–174; these read FGFD and HR.

Belongs to the HAM1 NTPase family. Homodimer. It depends on Mg(2+) as a cofactor.

It catalyses the reaction XTP + H2O = XMP + diphosphate + H(+). It carries out the reaction dITP + H2O = dIMP + diphosphate + H(+). The enzyme catalyses ITP + H2O = IMP + diphosphate + H(+). Its function is as follows. Pyrophosphatase that catalyzes the hydrolysis of nucleoside triphosphates to their monophosphate derivatives, with a high preference for the non-canonical purine nucleotides XTP (xanthosine triphosphate), dITP (deoxyinosine triphosphate) and ITP. Seems to function as a house-cleaning enzyme that removes non-canonical purine nucleotides from the nucleotide pool, thus preventing their incorporation into DNA/RNA and avoiding chromosomal lesions. This Saccharolobus solfataricus (strain ATCC 35092 / DSM 1617 / JCM 11322 / P2) (Sulfolobus solfataricus) protein is dITP/XTP pyrophosphatase.